A 301-amino-acid chain; its full sequence is ATP synthase gamma chain (301 aa).

Belongs to the ATPase gamma chain family. As to quaternary structure, F-type ATPases have 2 components, CF(1) - the catalytic core - and CF(0) - the membrane proton channel. CF(1) has five subunits: alpha(3), beta(3), gamma(1), delta(1), epsilon(1). CF(0) has three main subunits: a, b and c.

Its subcellular location is the cell inner membrane. Produces ATP from ADP in the presence of a proton gradient across the membrane. The gamma chain is believed to be important in regulating ATPase activity and the flow of protons through the CF(0) complex. The polypeptide is ATP synthase gamma chain (Helicobacter pylori (strain ATCC 700392 / 26695) (Campylobacter pylori)).